The sequence spans 167 residues: Gametocyte-specific factor 1 (167 aa).

Phosphoserine is present on Ser8. 2 CHHC U11-48K-type zinc fingers span residues 14 to 41 (LLQC…RKNH) and 48 to 75 (LATC…DDRS). Zn(2+)-binding residues include Cys17, His23, His33, Cys37, Cys51, His57, His67, and Cys71.

Belongs to the UPF0224 (FAM112) family.

The protein localises to the cytoplasm. Functionally, required for spermatogenesis and is involved in the suppression of retrotransposon transcription in male germ cells. The sequence is that of Gametocyte-specific factor 1 (GTSF1) from Homo sapiens (Human).